Reading from the N-terminus, the 120-residue chain is Protein TCL1B4 (120 aa).

The protein belongs to the TCL1 family.

In Mus musculus (Mouse), this protein is Protein TCL1B4 (Tcl1b4).